A 110-amino-acid chain; its full sequence is Large ribosomal subunit protein P1 (110 aa).

Blocked amino end (Ala) is present on alanine 2. Over residues 69 to 83 the composition is skewed to low complexity; it reads AAPAAGGAAAATEAP. The tract at residues 69–110 is disordered; sequence AAPAAGGAAAATEAPAAKEEKKEEKKEESEEEDEDMGFGLFD. Positions 84-96 are enriched in basic and acidic residues; the sequence is AAKEEKKEEKKEE. Residue serine 97 is modified to Phosphoserine; in form eL12'-P.

In terms of assembly, part of the ribosomal stalk of the large ribosomal subunit; P1 and P2 exist as dimers which assemble on the P0 scaffold. Post-translationally, phosphorylation of Ser-97 converts eL12' to eL12'-P.

Plays an important role in the elongation step of protein synthesis. The sequence is that of Large ribosomal subunit protein P1 from Artemia salina (Brine shrimp).